The sequence spans 129 residues: Small ribosomal subunit protein uS11 (129 aa).

The protein belongs to the universal ribosomal protein uS11 family. Part of the 30S ribosomal subunit. Interacts with proteins S7 and S18. Binds to IF-3.

In terms of biological role, located on the platform of the 30S subunit, it bridges several disparate RNA helices of the 16S rRNA. Forms part of the Shine-Dalgarno cleft in the 70S ribosome. In Escherichia fergusonii (strain ATCC 35469 / DSM 13698 / CCUG 18766 / IAM 14443 / JCM 21226 / LMG 7866 / NBRC 102419 / NCTC 12128 / CDC 0568-73), this protein is Small ribosomal subunit protein uS11.